We begin with the raw amino-acid sequence, 92 residues long: Small ribosomal subunit protein uS19c (92 aa).

This sequence belongs to the universal ribosomal protein uS19 family.

Its subcellular location is the plastid. The protein localises to the chloroplast. Protein S19 forms a complex with S13 that binds strongly to the 16S ribosomal RNA. The protein is Small ribosomal subunit protein uS19c of Guizotia abyssinica (Niger).